We begin with the raw amino-acid sequence, 252 residues long: F-box/SPRY domain-containing protein 1 (252 aa).

The 48-residue stretch at 1–48 folds into the F-box domain; it reads MVDPLCNYNVLESIFSYLELNDLNRCSQVCKSWYHFLNDENSDVWRWH. A B30.2/SPRY domain is found at 58 to 250; it reads VKSDLLSSVT…VSMVYLGTPL (193 aa).

It belongs to the FBXO45/Fsn family. In terms of assembly, component of an E3 ubiquitin ligase complex composed of hiw and Fsn.

It localises to the synapse. It participates in protein modification; protein ubiquitination. Functionally, required in the presynaptic motoneuron to down-regulate the levels of wnd and restrain synaptic terminal growth at the neuromuscular junction (NMJ). The polypeptide is F-box/SPRY domain-containing protein 1 (Drosophila grimshawi (Hawaiian fruit fly)).